The sequence spans 318 residues: Retinol dehydrogenase 5 (318 aa).

A helical membrane pass occupies residues 1–23 (MWLPLLLGALLWAVLWLLRDRQS). The Lumenal portion of the chain corresponds to 24–288 (LPASDAFIFI…TRYSPGWDAK (265 aa)). Position 32-56 (32-56 (FITGCDSGFGRLLALQLDQKGFQVL)) interacts with NADP(+). Serine 163 contacts substrate. Residue tyrosine 175 is the Proton acceptor of the active site. Residues 289-309 (LLWLPASYLPARVVDAVLTWI) traverse the membrane as a helical segment. Residues 310 to 318 (LPRPAQSVS) are Cytoplasmic-facing.

This sequence belongs to the short-chain dehydrogenases/reductases (SDR) family. As to quaternary structure, homodimer. In terms of tissue distribution, expressed in eye, liver, kidney, brain, intestine, placenta, epididymus and submaxillary gland. In eye, strongly expressed in the retinal pigment epithelium, with lower expression levels detected in the inner segment of the photoreceptor cells and in the outer plexiform layer. In kidney, strong expression detected in the distal tubules and the transitional epithelium in the renal pelvis, with weaker expression detected in the epithelium of the outer stripe of the outer zone of the medulla. In liver, detected in hepatocytes in the centrilobular area. In lung, present in club cells in the epithelium of the bronchiole, in parenchyma and in cartilage surrounding the secondary bronchi. In skin, expressed in epidermis, hair follicles and mast cells in the dermis. Expressed in heart. Not detected in heart. Not detected in lung, spleen, skeletal muscle and testis.

The protein localises to the endoplasmic reticulum membrane. The catalysed reaction is 11-cis-retinol + NAD(+) = 11-cis-retinal + NADH + H(+). It carries out the reaction 9-cis-retinol + NAD(+) = 9-cis-retinal + NADH + H(+). The enzyme catalyses 13-cis-retinol + NAD(+) = 13-cis-retinal + NADH + H(+). It catalyses the reaction androsterone + NAD(+) = 5alpha-androstan-3,17-dione + NADH + H(+). The catalysed reaction is 5alpha-androstane-3alpha,17beta-diol + NAD(+) = 17beta-hydroxy-5alpha-androstan-3-one + NADH + H(+). It participates in cofactor metabolism; retinol metabolism. Inhibited by 9-cis-, 13-cis- and all-trans-retinoic acids, with the most potent inhibitor being 13-cis-retinoic acid. Weakly inhibited by oleic acid. Its function is as follows. Catalyzes the oxidation of cis-isomers of retinol, including 11-cis-, 9-cis-, and 13-cis-retinol in an NAD-dependent manner. Has no activity towards all-trans retinal. Plays a significant role in 11-cis retinol oxidation in the retinal pigment epithelium cells (RPE). Also recognizes steroids (androsterone, androstanediol) as its substrates. This is Retinol dehydrogenase 5 from Mus musculus (Mouse).